A 469-amino-acid polypeptide reads, in one-letter code: Glutamate--tRNA ligase (469 aa).

The 'HIGH' region signature appears at 11–21; sequence PSPTGFIHLGN. Residues 118-131 are compositionally biased toward basic and acidic residues; it reads GEKPRYDGTWRPEP. The tract at residues 118–138 is disordered; that stretch reads GEKPRYDGTWRPEPGKVLPEP. The short motif at 243-247 is the 'KMSKS' region element; the sequence is KMSKR. Lysine 246 is an ATP binding site.

Belongs to the class-I aminoacyl-tRNA synthetase family. Glutamate--tRNA ligase type 1 subfamily. Monomer.

The protein resides in the cytoplasm. The enzyme catalyses tRNA(Glu) + L-glutamate + ATP = L-glutamyl-tRNA(Glu) + AMP + diphosphate. In terms of biological role, catalyzes the attachment of glutamate to tRNA(Glu) in a two-step reaction: glutamate is first activated by ATP to form Glu-AMP and then transferred to the acceptor end of tRNA(Glu). In Burkholderia vietnamiensis (strain G4 / LMG 22486) (Burkholderia cepacia (strain R1808)), this protein is Glutamate--tRNA ligase.